A 357-amino-acid chain; its full sequence is Holliday junction branch migration complex subunit RuvB (357 aa).

Residues 1 to 20 (MDDHDDSPVSPSFLKSDGEI) form a disordered region. The interval 1-185 (MDDHDDSPVS…FGFTGHMDFY (185 aa)) is large ATPase domain (RuvB-L). ATP contacts are provided by residues Leu-24, Arg-25, Gly-66, Lys-69, Thr-70, Ser-71, 132–134 (EDF), Arg-175, Tyr-185, and Arg-222. Thr-70 contributes to the Mg(2+) binding site. Residues 186-256 (EPGELLRILE…VARAALEVYD (71 aa)) are small ATPAse domain (RuvB-S). A head domain (RuvB-H) region spans residues 259-357 (TLGLDRLDRA…TSQPTLDLFD (99 aa)). 2 residues coordinate DNA: Arg-314 and Arg-319.

Belongs to the RuvB family. As to quaternary structure, homohexamer. Forms an RuvA(8)-RuvB(12)-Holliday junction (HJ) complex. HJ DNA is sandwiched between 2 RuvA tetramers; dsDNA enters through RuvA and exits via RuvB. An RuvB hexamer assembles on each DNA strand where it exits the tetramer. Each RuvB hexamer is contacted by two RuvA subunits (via domain III) on 2 adjacent RuvB subunits; this complex drives branch migration. In the full resolvosome a probable DNA-RuvA(4)-RuvB(12)-RuvC(2) complex forms which resolves the HJ.

It is found in the cytoplasm. The catalysed reaction is ATP + H2O = ADP + phosphate + H(+). The RuvA-RuvB-RuvC complex processes Holliday junction (HJ) DNA during genetic recombination and DNA repair, while the RuvA-RuvB complex plays an important role in the rescue of blocked DNA replication forks via replication fork reversal (RFR). RuvA specifically binds to HJ cruciform DNA, conferring on it an open structure. The RuvB hexamer acts as an ATP-dependent pump, pulling dsDNA into and through the RuvAB complex. RuvB forms 2 homohexamers on either side of HJ DNA bound by 1 or 2 RuvA tetramers; 4 subunits per hexamer contact DNA at a time. Coordinated motions by a converter formed by DNA-disengaged RuvB subunits stimulates ATP hydrolysis and nucleotide exchange. Immobilization of the converter enables RuvB to convert the ATP-contained energy into a lever motion, pulling 2 nucleotides of DNA out of the RuvA tetramer per ATP hydrolyzed, thus driving DNA branch migration. The RuvB motors rotate together with the DNA substrate, which together with the progressing nucleotide cycle form the mechanistic basis for DNA recombination by continuous HJ branch migration. Branch migration allows RuvC to scan DNA until it finds its consensus sequence, where it cleaves and resolves cruciform DNA. The protein is Holliday junction branch migration complex subunit RuvB of Nocardia farcinica (strain IFM 10152).